Reading from the N-terminus, the 100-residue chain is MARQSLIQREKKRHKLEQKYHLIRRSSKKEINKAPSLSDKWKIHGKLQSSPRNSAPTRLHRRCFLTGRPRANYRDFGLSGHILREMVHACLLPGATRSSW.

The protein belongs to the universal ribosomal protein uS14 family. As to quaternary structure, part of the 30S ribosomal subunit.

It is found in the plastid. It localises to the chloroplast. Its function is as follows. Binds 16S rRNA, required for the assembly of 30S particles. The sequence is that of Small ribosomal subunit protein uS14c from Citrus sinensis (Sweet orange).